A 365-amino-acid polypeptide reads, in one-letter code: Histidinol-phosphate aminotransferase (365 aa).

The residue at position 220 (lysine 220) is an N6-(pyridoxal phosphate)lysine.

This sequence belongs to the class-II pyridoxal-phosphate-dependent aminotransferase family. Histidinol-phosphate aminotransferase subfamily. In terms of assembly, homodimer. It depends on pyridoxal 5'-phosphate as a cofactor.

The catalysed reaction is L-histidinol phosphate + 2-oxoglutarate = 3-(imidazol-4-yl)-2-oxopropyl phosphate + L-glutamate. It functions in the pathway amino-acid biosynthesis; L-histidine biosynthesis; L-histidine from 5-phospho-alpha-D-ribose 1-diphosphate: step 7/9. This chain is Histidinol-phosphate aminotransferase, found in Xylella fastidiosa (strain 9a5c).